Reading from the N-terminus, the 594-residue chain is uncharacterized protein (594 aa).

The segment at residues 11 to 38 (CELCRRKKIRCNRELPSCQNCIVYQEEC) is a DNA-binding region (zn(2)-C6 fungal-type). The helical transmembrane segment at 503–523 (YLWVFLYCPFTPFLVLFSNIV) threads the bilayer.

It is found in the nucleus. It localises to the membrane. This is an uncharacterized protein from Schizosaccharomyces pombe (strain 972 / ATCC 24843) (Fission yeast).